A 227-amino-acid polypeptide reads, in one-letter code: ATP synthase F(0) complex subunit a (227 aa).

Transmembrane regions (helical) follow at residues 14–34 (LFGI…FPAP), 69–89 (WGPY…LGLL), 98–118 (QLSV…IIGL), 132–152 (EGTP…SLFI), 180–200 (FVLL…LFLL), and 202–222 (LLEV…LSLY).

This sequence belongs to the ATPase A chain family. In terms of assembly, component of the ATP synthase complex composed at least of ATP5F1A/subunit alpha, ATP5F1B/subunit beta, ATP5MC1/subunit c (homooctomer), MT-ATP6/subunit a, MT-ATP8/subunit 8, ATP5ME/subunit e, ATP5MF/subunit f, ATP5MG/subunit g, ATP5MK/subunit k, ATP5MJ/subunit j, ATP5F1C/subunit gamma, ATP5F1D/subunit delta, ATP5F1E/subunit epsilon, ATP5PF/subunit F6, ATP5PB/subunit b, ATP5PD/subunit d, ATP5PO/subunit OSCP. ATP synthase complex consists of a soluble F(1) head domain (subunits alpha(3) and beta(3)) - the catalytic core - and a membrane F(0) domain - the membrane proton channel (subunits c, a, 8, e, f, g, k and j). These two domains are linked by a central stalk (subunits gamma, delta, and epsilon) rotating inside the F1 region and a stationary peripheral stalk (subunits F6, b, d, and OSCP). Interacts with DNAJC30; interaction is direct.

It localises to the mitochondrion inner membrane. It carries out the reaction H(+)(in) = H(+)(out). Subunit a, of the mitochondrial membrane ATP synthase complex (F(1)F(0) ATP synthase or Complex V) that produces ATP from ADP in the presence of a proton gradient across the membrane which is generated by electron transport complexes of the respiratory chain. ATP synthase complex consist of a soluble F(1) head domain - the catalytic core - and a membrane F(1) domain - the membrane proton channel. These two domains are linked by a central stalk rotating inside the F(1) region and a stationary peripheral stalk. During catalysis, ATP synthesis in the catalytic domain of F(1) is coupled via a rotary mechanism of the central stalk subunits to proton translocation. With the subunit c (ATP5MC1), forms the proton-conducting channel in the F(0) domain, that contains two crucial half-channels (inlet and outlet) that facilitate proton movement from the mitochondrial intermembrane space (IMS) into the matrix. Protons are taken up via the inlet half-channel and released through the outlet half-channel, following a Grotthuss mechanism. The chain is ATP synthase F(0) complex subunit a from Tetraodon nigroviridis (Spotted green pufferfish).